A 200-amino-acid chain; its full sequence is Small ribosomal subunit protein uS4 (200 aa).

The tract at residues 22–42 (TGKELQKRPYPPGQHGPGQRR) is disordered. The S4 RNA-binding domain occupies 92-152 (SRLDNLVYRL…EKSRNLQVIK (61 aa)).

The protein belongs to the universal ribosomal protein uS4 family. In terms of assembly, part of the 30S ribosomal subunit. Contacts protein S5. The interaction surface between S4 and S5 is involved in control of translational fidelity.

Functionally, one of the primary rRNA binding proteins, it binds directly to 16S rRNA where it nucleates assembly of the body of the 30S subunit. Its function is as follows. With S5 and S12 plays an important role in translational accuracy. The sequence is that of Small ribosomal subunit protein uS4 (rpsD) from Geobacillus stearothermophilus (Bacillus stearothermophilus).